A 414-amino-acid polypeptide reads, in one-letter code: Gamma-glutamyl phosphate reductase (414 aa).

The protein belongs to the gamma-glutamyl phosphate reductase family.

Its subcellular location is the cytoplasm. The catalysed reaction is L-glutamate 5-semialdehyde + phosphate + NADP(+) = L-glutamyl 5-phosphate + NADPH + H(+). It participates in amino-acid biosynthesis; L-proline biosynthesis; L-glutamate 5-semialdehyde from L-glutamate: step 2/2. Catalyzes the NADPH-dependent reduction of L-glutamate 5-phosphate into L-glutamate 5-semialdehyde and phosphate. The product spontaneously undergoes cyclization to form 1-pyrroline-5-carboxylate. This chain is Gamma-glutamyl phosphate reductase, found in Kosmotoga olearia (strain ATCC BAA-1733 / DSM 21960 / TBF 19.5.1).